A 404-amino-acid polypeptide reads, in one-letter code: Cysteine desulfurase IscS (404 aa).

Pyridoxal 5'-phosphate-binding positions include 75–76 (AT), N155, Q183, and 203–205 (SAH). The residue at position 206 (K206) is an N6-(pyridoxal phosphate)lysine. T243 provides a ligand contact to pyridoxal 5'-phosphate. Catalysis depends on C328, which acts as the Cysteine persulfide intermediate. C328 provides a ligand contact to [2Fe-2S] cluster.

This sequence belongs to the class-V pyridoxal-phosphate-dependent aminotransferase family. NifS/IscS subfamily. Homodimer. Forms a heterotetramer with IscU, interacts with other sulfur acceptors. Pyridoxal 5'-phosphate serves as cofactor.

Its subcellular location is the cytoplasm. It catalyses the reaction (sulfur carrier)-H + L-cysteine = (sulfur carrier)-SH + L-alanine. It functions in the pathway cofactor biosynthesis; iron-sulfur cluster biosynthesis. Master enzyme that delivers sulfur to a number of partners involved in Fe-S cluster assembly, tRNA modification or cofactor biosynthesis. Catalyzes the removal of elemental sulfur atoms from cysteine to produce alanine. Functions as a sulfur delivery protein for Fe-S cluster synthesis onto IscU, an Fe-S scaffold assembly protein, as well as other S acceptor proteins. This Photorhabdus laumondii subsp. laumondii (strain DSM 15139 / CIP 105565 / TT01) (Photorhabdus luminescens subsp. laumondii) protein is Cysteine desulfurase IscS.